The following is a 350-amino-acid chain: Ion-translocating oxidoreductase complex subunit D (350 aa).

The next 3 membrane-spanning stretches (helical) occupy residues 25–45 (ALCL…GSLI), 89–109 (IPPL…IIIV), and 124–144 (AMAG…SWVA). FMN phosphoryl threonine is present on threonine 185. The next 5 helical transmembrane spans lie at 212-232 (SYGV…LVLL), 239-259 (WHIS…GFLI), 265-285 (VSPL…FIAT), 298-318 (LIFG…GGYP), and 319-339 (DAVA…DHYV).

Belongs to the NqrB/RnfD family. The complex is composed of six subunits: RnfA, RnfB, RnfC, RnfD, RnfE and RnfG. Requires FMN as cofactor.

The protein localises to the cell inner membrane. Functionally, part of a membrane-bound complex that couples electron transfer with translocation of ions across the membrane. This is Ion-translocating oxidoreductase complex subunit D from Shewanella denitrificans (strain OS217 / ATCC BAA-1090 / DSM 15013).